The primary structure comprises 246 residues: 1-(5-phosphoribosyl)-5-[(5-phosphoribosylamino)methylideneamino] imidazole-4-carboxamide isomerase (246 aa).

The active-site Proton acceptor is Asp-8. Asp-130 (proton donor) is an active-site residue.

It belongs to the HisA/HisF family.

The protein localises to the cytoplasm. The enzyme catalyses 1-(5-phospho-beta-D-ribosyl)-5-[(5-phospho-beta-D-ribosylamino)methylideneamino]imidazole-4-carboxamide = 5-[(5-phospho-1-deoxy-D-ribulos-1-ylimino)methylamino]-1-(5-phospho-beta-D-ribosyl)imidazole-4-carboxamide. The protein operates within amino-acid biosynthesis; L-histidine biosynthesis; L-histidine from 5-phospho-alpha-D-ribose 1-diphosphate: step 4/9. This chain is 1-(5-phosphoribosyl)-5-[(5-phosphoribosylamino)methylideneamino] imidazole-4-carboxamide isomerase, found in Shigella dysenteriae serotype 1 (strain Sd197).